A 484-amino-acid chain; its full sequence is Cytochrome P450 monooxygenase poxD (484 aa).

Residues 2-24 traverse the membrane as a helical segment; it reads VSPVVLATTAMIVVFLLAQRYLS. A heme-binding site is contributed by cysteine 429.

Belongs to the cytochrome P450 family. Heme is required as a cofactor.

It is found in the membrane. Its pathway is secondary metabolite biosynthesis. Its function is as follows. Cytochrome P450 monooxygenase; part of the gene cluster that mediates the biosynthesis of oxaleimides, cytotoxic compounds containing an unusual disubstituted succinimide moiety. The first step of the pathway is provided by the HR-PKS poxF that serves in a new mode of collaborative biosynthesis with the PKS-NRPS poxE, by providing the olefin containing amino acid substrate via the synthesis of an ACP-bound dec-4-enoate. The cytochrome P450 monooxygenase poxM-catalyzed oxidation at the alpha-position creates the enzyme-bound 2-hydroxydec-4-enoyl-ACP thioester, which may be prone to spontaneous hydrolysis to yield 2-hydroxydec-4-enoic acid due to increased electrophilicity of the carbonyl. 2-hydroxydec-4-enoic acid can then be further oxidized by poxM to yield the alpha-ketoacid 2-oxodec-4-enoicacid, which is reductively aminated by the aminotransferase poxL to yield (S,E)-2-aminodec-4-enoic acid. The Hybrid PKS-NRPS synthetase poxE then performs condensation between the octaketide product of its PKS modules and the amino group of (S,E)-2-aminodec-4-enoic acid which is activated and incorporated by the adenylation domain. The resulting aminoacyl product can be cyclized by the Diels-Alderase PoxQ and reductively released by the reductive (R) domain of poxE to yield an aldehyde intermediate. The released aldehyde is then substrate for a Knoevenagel condensation by the hydrolyase poxO followed by an oxidation at the 5-position of the pyrrolidone ring. The presence of the olefin from the amino acid building block allows for migration of the substituted allyl group to occur. This allylic transposition reaction takes place in a conjugate addition, semipinacol-like fashion to yield a succinimide intermediate. Iterative two-electron oxidations of the C7 methyl of the succinimide intermediate to the carboxylic acid can be catalyzed by one of two remaining cytochrome P450 monooxygenasess poxC or poxD to yield oxaleimide A. Subsequent oxidation yields the maleimide scaffold oxaleimide I. Both oxaleimide A and oxaleimide I can undergo oxidative modifications in the decalin ring to yield the series of products oxaleimides B to H. The protein is Cytochrome P450 monooxygenase poxD of Penicillium oxalicum.